Consider the following 489-residue polypeptide: Probable serine protease EDA2 (489 aa).

Residues 1 to 25 form the signal peptide; sequence MSLEFGFILINIFTAIVSFSTLSHA. N-linked (GlcNAc...) asparagine glycosylation is found at Asn35, Asn51, and Asn162. Ser178 (charge relay system) is an active-site residue. 4 N-linked (GlcNAc...) asparagine glycosylation sites follow: Asn253, Asn293, Asn365, and Asn406. The Charge relay system role is filled by Asp410. Asn419 carries N-linked (GlcNAc...) asparagine glycosylation. The active-site Charge relay system is His436. The N-linked (GlcNAc...) asparagine glycan is linked to Asn456.

Belongs to the peptidase S28 family.

It localises to the secreted. Its function is as follows. May be involved in a proteolytic pathway controlling the nuclear division phase of megagametogenesis. The protein is Probable serine protease EDA2 (EDA2) of Arabidopsis thaliana (Mouse-ear cress).